We begin with the raw amino-acid sequence, 313 residues long: Ketimine reductase mu-crystallin (313 aa).

R47 provides a ligand contact to 3,3',5-triiodo-L-thyronine. Positions 90, 91, 118, 143, 145, 146, 167, 168, 169, 172, 204, 205, and 225 each coordinate NADPH. Position 256 (E256) interacts with 3,3',5-triiodo-L-thyronine. Residue S291 participates in NADPH binding.

The protein belongs to the ornithine cyclodeaminase/mu-crystallin family. Homodimer. Binds the thyroid hormone triiodothyronine (T3); T3 binding inhibits enzymatic activity.

Its subcellular location is the cytoplasm. It carries out the reaction L-pipecolate + NADP(+) = Delta(1)-piperideine-2-carboxylate + NADPH + H(+). It catalyses the reaction L-pipecolate + NAD(+) = Delta(1)-piperideine-2-carboxylate + NADH + H(+). The enzyme catalyses L-proline + NADP(+) = 1-pyrroline-2-carboxylate + NADPH + H(+). The catalysed reaction is L-proline + NAD(+) = 1-pyrroline-2-carboxylate + NADH + H(+). It carries out the reaction (3R)-1,4-thiomorpholine-3-carboxylate + NAD(+) = 3,4-dehydrothiomorpholine-3-carboxylate + NADH + 2 H(+). It catalyses the reaction (3R)-1,4-thiomorpholine-3-carboxylate + NADP(+) = 3,4-dehydrothiomorpholine-3-carboxylate + NADPH + 2 H(+). The enzyme catalyses (S)-cystathionine ketimine + NADH + 2 H(+) = (3R,5S)-2,3,5,6,7-pentahydro-1,4-thiazepine-3,5-dicarboxylate + NAD(+). The catalysed reaction is (S)-cystathionine ketimine + NADPH + 2 H(+) = (3R,5S)-2,3,5,6,7-pentahydro-1,4-thiazepine-3,5-dicarboxylate + NADP(+). It carries out the reaction (R)-lanthionine ketimine + NADPH + 2 H(+) = (3R,5R)-1,4-thiomorpholine-3,5-dicarboxylate + NADP(+). It catalyses the reaction Delta(2)-thiazoline-2-carboxylate + NADPH + 2 H(+) = L-thiazolidine-2-carboxylate + NADP(+). Its function is as follows. Catalyzes the NAD(P)H-dependent reduction of imine double bonds of a number of cyclic ketimine substrates, including sulfur-containing cyclic ketimines. Under physiological conditions, it efficiently catalyzes delta(1)-piperideine-2-carboxylate (P2C) and delta(1)-pyrroline-2-carboxylate (Pyr2C) reduction, suggesting a central role in lysine and glutamate metabolism. Additional substrates are delta(2)-thiazoline-2-carboxylate (T2C), 3,4-dehydrothiomorpholine-3-carboxylate (AECK), and (R)-lanthionine ketimine (LK) that is reduced at very low rate compared to other substrates. Also catalyzes the NAD(P)H-dependent reduction of (S)-cystathionine ketimine (CysK). The sequence is that of Ketimine reductase mu-crystallin from Rattus norvegicus (Rat).